Consider the following 368-residue polypeptide: ATP-dependent (S)-NAD(P)H-hydrate dehydratase (368 aa).

The YjeF C-terminal domain maps to 3 to 359 (SPSKKLLANV…DEVHGSFLDL (357 aa)). (6S)-NADPHX-binding positions include glycine 120 and 173–179 (NVVEFAR). ATP contacts are provided by residues 217–221 (KGPHD) and 236–245 (GGLKRSGGQG). Aspartate 246 lines the (6S)-NADPHX pocket.

The protein belongs to the NnrD/CARKD family. Requires Mg(2+) as cofactor.

It is found in the cytoplasm. It catalyses the reaction (6S)-NADHX + ATP = ADP + phosphate + NADH + H(+). The enzyme catalyses (6S)-NADPHX + ATP = ADP + phosphate + NADPH + H(+). Functionally, catalyzes the dehydration of the S-form of NAD(P)HX at the expense of ATP, which is converted to ADP. Together with NAD(P)HX epimerase, which catalyzes the epimerization of the S- and R-forms, the enzyme allows the repair of both epimers of NAD(P)HX, a damaged form of NAD(P)H that is a result of enzymatic or heat-dependent hydration. This is ATP-dependent (S)-NAD(P)H-hydrate dehydratase from Ajellomyces capsulatus (strain G186AR / H82 / ATCC MYA-2454 / RMSCC 2432) (Darling's disease fungus).